Here is a 138-residue protein sequence, read N- to C-terminus: Biopolymer transport protein exbD1 (138 aa).

Residues 1–16 lie on the Cytoplasmic side of the membrane; sequence MIKSSAKHNDFGLTPD. A helical transmembrane segment spans residues 17-37; it reads LTPLLDIIFIVMVFLLLTASV. Residues 38–138 are Periplasmic-facing; it reads RLESLEVALP…TQLLTEPSHS (101 aa).

This sequence belongs to the ExbD/TolR family. The accessory proteins ExbB and ExbD seem to form a complex with TonB.

It is found in the cell inner membrane. Involved in the TonB-dependent energy-dependent transport of various receptor-bound substrates. The protein is Biopolymer transport protein exbD1 (exbD1) of Vibrio cholerae serotype O1 (strain ATCC 39315 / El Tor Inaba N16961).